The sequence spans 141 residues: Organic hydroperoxide resistance protein OhrA (141 aa).

This sequence belongs to the OsmC/Ohr family.

In terms of biological role, involved in organic hydroperoxide resistance. In Bacillus subtilis (strain 168), this protein is Organic hydroperoxide resistance protein OhrA (ohrA).